The chain runs to 966 residues: Probable LIM domain-containing serine/threonine-protein kinase DDB_G0286997 (966 aa).

2 consecutive LIM zinc-binding domains span residues 3–62 and 63–120; these read SRCG…LNAP and KCFK…KPPP. Disordered stretches follow at residues 208 to 291 and 331 to 588; these read YSLS…PTED and PLNQ…EQQV. The segment covering 211-231 has biased composition (low complexity); the sequence is SSPSSSSSSSSSSSSSSSSPP. A compositionally biased stretch (polar residues) spans 232 to 269; sequence NTFNKSSDFLRNPLNNNVKSSSSSIGGNFVNKSQQQQQ. Composition is skewed to low complexity over residues 270-284 and 331-350; these read PIDS…ISPS and PLNQ…SPNL. Residues 374-389 are compositionally biased toward polar residues; it reads TTTFSNPLLKTKNQSF. Residues 419-430 are compositionally biased toward pro residues; it reads PLPPPPITPIPS. A compositionally biased stretch (low complexity) spans 431 to 449; it reads PSSSSIIINNQQQQQQESQ. Over residues 490–511 the composition is skewed to pro residues; sequence KPIVLPPPPLDMEQLPLPPPPL. The span at 513–526 shows a compositional bias: polar residues; that stretch reads SSQINQSLKSTQHN. The segment covering 543–560 has biased composition (low complexity); it reads IQKQSIPTRKPQLPQSSN. Positions 561 to 570 are enriched in pro residues; that stretch reads PSPPSPPSPQ. The region spanning 702 to 959 is the Protein kinase domain; the sequence is VIFGDVIAAG…DTLKKISESL (258 aa). ATP-binding positions include 708-716 and Lys-729; that span reads IAAGASGKV. Asp-825 serves as the catalytic Proton acceptor.

It belongs to the protein kinase superfamily. TKL Ser/Thr protein kinase family.

It catalyses the reaction L-seryl-[protein] + ATP = O-phospho-L-seryl-[protein] + ADP + H(+). It carries out the reaction L-threonyl-[protein] + ATP = O-phospho-L-threonyl-[protein] + ADP + H(+). The polypeptide is Probable LIM domain-containing serine/threonine-protein kinase DDB_G0286997 (Dictyostelium discoideum (Social amoeba)).